Reading from the N-terminus, the 391-residue chain is Dual-specificity RNA methyltransferase RlmN (391 aa).

Glu-112 acts as the Proton acceptor in catalysis. The 251-residue stretch at 118–368 folds into the Radical SAM core domain; the sequence is ESDRGTLCIS…VRTPRGRDIL (251 aa). Cys-125 and Cys-371 are oxidised to a cystine. Positions 132, 136, and 139 each coordinate [4Fe-4S] cluster. Residues 197-198, Ser-229, 251-253, and Asn-328 contribute to the S-adenosyl-L-methionine site; these read GE and SLH. Cys-371 serves as the catalytic S-methylcysteine intermediate.

It belongs to the radical SAM superfamily. RlmN family. Requires [4Fe-4S] cluster as cofactor.

The protein localises to the cytoplasm. It catalyses the reaction adenosine(2503) in 23S rRNA + 2 reduced [2Fe-2S]-[ferredoxin] + 2 S-adenosyl-L-methionine = 2-methyladenosine(2503) in 23S rRNA + 5'-deoxyadenosine + L-methionine + 2 oxidized [2Fe-2S]-[ferredoxin] + S-adenosyl-L-homocysteine. The enzyme catalyses adenosine(37) in tRNA + 2 reduced [2Fe-2S]-[ferredoxin] + 2 S-adenosyl-L-methionine = 2-methyladenosine(37) in tRNA + 5'-deoxyadenosine + L-methionine + 2 oxidized [2Fe-2S]-[ferredoxin] + S-adenosyl-L-homocysteine. Specifically methylates position 2 of adenine 2503 in 23S rRNA and position 2 of adenine 37 in tRNAs. m2A2503 modification seems to play a crucial role in the proofreading step occurring at the peptidyl transferase center and thus would serve to optimize ribosomal fidelity. This is Dual-specificity RNA methyltransferase RlmN from Beijerinckia indica subsp. indica (strain ATCC 9039 / DSM 1715 / NCIMB 8712).